The following is a 207-amino-acid chain: Large ribosomal subunit protein uL4 (207 aa).

Belongs to the universal ribosomal protein uL4 family. As to quaternary structure, part of the 50S ribosomal subunit.

Its function is as follows. One of the primary rRNA binding proteins, this protein initially binds near the 5'-end of the 23S rRNA. It is important during the early stages of 50S assembly. It makes multiple contacts with different domains of the 23S rRNA in the assembled 50S subunit and ribosome. Functionally, forms part of the polypeptide exit tunnel. The chain is Large ribosomal subunit protein uL4 from Geobacter sulfurreducens (strain ATCC 51573 / DSM 12127 / PCA).